Here is a 167-residue protein sequence, read N- to C-terminus: MINVEIIKNYDKWREHKQINKSLIQKITQNILLRFNNFSKIKQFELSMLLTNTAEILTLNKQFRNIEKATNVLAFPSNELNWQDLYSKLEFLGDSDYMHLGDVAFCYEVIYNESCEQQKTFENHFIHLLIHSILHLIGFDHQNDTEAHIMENLEIEILSYFGISSPY.

Zn(2+)-binding residues include His-131, His-135, and His-141.

This sequence belongs to the endoribonuclease YbeY family. The cofactor is Zn(2+).

The protein resides in the cytoplasm. In terms of biological role, single strand-specific metallo-endoribonuclease involved in late-stage 70S ribosome quality control and in maturation of the 3' terminus of the 16S rRNA. In Rickettsia akari (strain Hartford), this protein is Endoribonuclease YbeY.